The sequence spans 406 residues: Multifunctional CCA protein (406 aa).

Positions 8 and 11 each coordinate ATP. Glycine 8 and arginine 11 together coordinate CTP. Glutamate 21 and aspartate 23 together coordinate Mg(2+). Residues arginine 91, arginine 137, and arginine 140 each contribute to the ATP site. The CTP site is built by arginine 91, arginine 137, and arginine 140. One can recognise an HD domain in the interval 225–326; that stretch reads TGIHTLKVLE…LKLLNRVDAF (102 aa).

This sequence belongs to the tRNA nucleotidyltransferase/poly(A) polymerase family. Bacterial CCA-adding enzyme type 1 subfamily. As to quaternary structure, monomer. Can also form homodimers and oligomers. The cofactor is Mg(2+). It depends on Ni(2+) as a cofactor.

The catalysed reaction is a tRNA precursor + 2 CTP + ATP = a tRNA with a 3' CCA end + 3 diphosphate. It carries out the reaction a tRNA with a 3' CCA end + 2 CTP + ATP = a tRNA with a 3' CCACCA end + 3 diphosphate. Catalyzes the addition and repair of the essential 3'-terminal CCA sequence in tRNAs without using a nucleic acid template. Adds these three nucleotides in the order of C, C, and A to the tRNA nucleotide-73, using CTP and ATP as substrates and producing inorganic pyrophosphate. tRNA 3'-terminal CCA addition is required both for tRNA processing and repair. Also involved in tRNA surveillance by mediating tandem CCA addition to generate a CCACCA at the 3' terminus of unstable tRNAs. While stable tRNAs receive only 3'-terminal CCA, unstable tRNAs are marked with CCACCA and rapidly degraded. The sequence is that of Multifunctional CCA protein from Nitrosococcus oceani (strain ATCC 19707 / BCRC 17464 / JCM 30415 / NCIMB 11848 / C-107).